The sequence spans 156 residues: Small ribosomal subunit protein uS7 (156 aa).

This sequence belongs to the universal ribosomal protein uS7 family. Part of the 30S ribosomal subunit. Contacts proteins S9 and S11.

One of the primary rRNA binding proteins, it binds directly to 16S rRNA where it nucleates assembly of the head domain of the 30S subunit. Is located at the subunit interface close to the decoding center, probably blocks exit of the E-site tRNA. The sequence is that of Small ribosomal subunit protein uS7 from Prochlorococcus marinus (strain MIT 9312).